An 809-amino-acid chain; its full sequence is Glutamine--tRNA ligase (809 aa).

A compositionally biased stretch (basic and acidic residues) spans 185-198 (DLIKKKTKNNEKKK). The disordered stretch occupies residues 185 to 216 (DLIKKKTKNNEKKKTNSAKKSSDNSASSGPKR). Positions 258 to 268 (PEPNGYLHIGH) match the 'HIGH' region motif. ATP-binding positions include 259 to 261 (EPN) and 265 to 271 (HIGHSKA). Residue aspartate 291 coordinates L-glutamine. Position 378 is a phosphoserine (serine 378). Tyrosine 440 serves as a coordination point for L-glutamine. ATP is bound by residues threonine 459, 488–489 (RL), and 496–498 (LSK). Residues 495–499 (VLSKR) carry the 'KMSKS' region motif.

This sequence belongs to the class-I aminoacyl-tRNA synthetase family.

It catalyses the reaction tRNA(Gln) + L-glutamine + ATP = L-glutaminyl-tRNA(Gln) + AMP + diphosphate. The protein is Glutamine--tRNA ligase (GLN4) of Saccharomyces cerevisiae (strain ATCC 204508 / S288c) (Baker's yeast).